Reading from the N-terminus, the 1642-residue chain is Mitochondrial 3' processome subunit 2 (1642 aa).

A mitochondrion-targeting transit peptide spans 1 to 27 (MGLPFLCHTRVCLFSNKIPFVLCGSRF). Disordered stretches follow at residues 43–69 (ETLNFPELSSPSTSKEPSVGSDSPQKK) and 745–772 (KGEKTDVVQHQQPSRLNEGGELPTLSGP). Polar residues predominate over residues 49–65 (ELSSPSTSKEPSVGSDS).

As to quaternary structure, component of the mitochondrial 3' processome (MPsome) complex composed at least of terminal uridylyltransferase KRET1/TUT1, 3'-5' exonuclease DSS1, MPSS1, MPSS2 and MPSS3. Within the complex, interacts with DSS1.

The protein resides in the mitochondrion. Its function is as follows. As part of the mitochondrial 3' processome (MPsome), involved in the maturation of guided RNA (gRNA) precursors. This is Mitochondrial 3' processome subunit 2 from Trypanosoma brucei brucei.